The primary structure comprises 245 residues: tRNA pseudouridine synthase A (245 aa).

The active-site Nucleophile is the Asp52. A substrate-binding site is contributed by Tyr111.

It belongs to the tRNA pseudouridine synthase TruA family. In terms of assembly, homodimer.

It carries out the reaction uridine(38/39/40) in tRNA = pseudouridine(38/39/40) in tRNA. Formation of pseudouridine at positions 38, 39 and 40 in the anticodon stem and loop of transfer RNAs. This chain is tRNA pseudouridine synthase A, found in Rickettsia felis (strain ATCC VR-1525 / URRWXCal2) (Rickettsia azadi).